Here is a 475-residue protein sequence, read N- to C-terminus: tRNA-2-methylthio-N(6)-dimethylallyladenosine synthase (475 aa).

The segment at 1–21 (MTTAPTSPALPASSDTAPTGP) is disordered. Residues 24–145 (RGLHVITWGC…LPEMVARAAR (122 aa)) form the MTTase N-terminal domain. The [4Fe-4S] cluster site is built by Cys33, Cys69, Cys108, Cys186, Cys190, and Cys193. The Radical SAM core domain maps to 172-404 (TQGNLTAFLT…QALLREQQDA (233 aa)). One can recognise a TRAM domain in the interval 407–469 (ADMVGTVQEI…TNSLGGTLIR (63 aa)).

The protein belongs to the methylthiotransferase family. MiaB subfamily. Monomer. It depends on [4Fe-4S] cluster as a cofactor.

The protein localises to the cytoplasm. It carries out the reaction N(6)-dimethylallyladenosine(37) in tRNA + (sulfur carrier)-SH + AH2 + 2 S-adenosyl-L-methionine = 2-methylsulfanyl-N(6)-dimethylallyladenosine(37) in tRNA + (sulfur carrier)-H + 5'-deoxyadenosine + L-methionine + A + S-adenosyl-L-homocysteine + 2 H(+). Catalyzes the methylthiolation of N6-(dimethylallyl)adenosine (i(6)A), leading to the formation of 2-methylthio-N6-(dimethylallyl)adenosine (ms(2)i(6)A) at position 37 in tRNAs that read codons beginning with uridine. The sequence is that of tRNA-2-methylthio-N(6)-dimethylallyladenosine synthase from Gluconobacter oxydans (strain 621H) (Gluconobacter suboxydans).